A 256-amino-acid polypeptide reads, in one-letter code: H-2 class II histocompatibility antigen, A-K alpha chain (256 aa).

The signal sequence occupies residues methionine 1–glycine 23. The interval glutamate 24 to asparagine 111 is alpha-1. Topologically, residues glutamate 24 to glutamate 218 are extracellular. N-linked (GlcNAc...) asparagine glycans are attached at residues asparagine 105 and asparagine 145. Residues glutamate 112–tryptophan 205 form an alpha-2 region. Positions proline 114–glutamate 206 constitute an Ig-like C1-type domain. A disulfide bond links cysteine 134 and cysteine 190. The segment at glutamate 206–glutamate 218 is connecting peptide. Residues threonine 219 to isoleucine 241 traverse the membrane as a helical segment. Residues glutamine 242–leucine 256 are Cytoplasmic-facing.

It belongs to the MHC class II family.

It is found in the membrane. The sequence is that of H-2 class II histocompatibility antigen, A-K alpha chain (H2-Aa) from Mus musculus (Mouse).